We begin with the raw amino-acid sequence, 209 residues long: MRNSAGLFMIMEPDRAVLLCARRAYHGGAVSDTFLEKISIPRGHRDCTDAKIYETAVREFVEETGRFFHSAYIYKFPFTLHWTDEGVTYKYSIYVGVVRGALADVKFKPNTYTVKLLPGANNDYRIVLRPRRFNCEISRSLTIVPLNQYFDYMTSKQLNTYASSNYGEFFDFVRQVKRLFDNKQLHDFFHASLQRVDPNDALACPGPQR.

The 167-residue stretch at 1–167 folds into the Nudix hydrolase domain; sequence MRNSAGLFMI…LNTYASSNYG (167 aa).

This is an uncharacterized protein from Orgyia pseudotsugata (Douglas-fir tussock moth).